The primary structure comprises 538 residues: Adenine deaminase (538 aa).

It belongs to the metallo-dependent hydrolases superfamily. Adenine deaminase family. The cofactor is Mn(2+).

The catalysed reaction is adenine + H2O + H(+) = hypoxanthine + NH4(+). This is Adenine deaminase from Methanothermobacter thermautotrophicus (strain ATCC 29096 / DSM 1053 / JCM 10044 / NBRC 100330 / Delta H) (Methanobacterium thermoautotrophicum).